The chain runs to 473 residues: Adenosylhomocysteinase (473 aa).

Substrate contacts are provided by residues 58-62, aspartate 135, and glutamate 197; that span reads HMTIQ. Residue 198-200 coordinates NAD(+); sequence TTT. Positions 227 and 231 each coordinate substrate. Residues asparagine 232, valine 265, glutamate 284, asparagine 319, 340–342, and asparagine 385 contribute to the NAD(+) site; that span reads IGH. Histidine 342 is a binding site for substrate. Histidine 392 provides a ligand contact to substrate. Positions 467 and 471 each coordinate NAD(+).

The protein belongs to the adenosylhomocysteinase family. In terms of assembly, homotetramer; dimer of dimers. It depends on NAD(+) as a cofactor.

It localises to the cytoplasm. It carries out the reaction S-adenosyl-L-homocysteine + H2O = L-homocysteine + adenosine. It participates in amino-acid biosynthesis; L-homocysteine biosynthesis; L-homocysteine from S-adenosyl-L-homocysteine: step 1/1. In terms of biological role, may play a key role in the regulation of the intracellular concentration of adenosylhomocysteine, which is a strong inhibitor of SAM-dependent methyltransferases. Catalyzes the hydrolysis of S-adenosyl-L-homocysteine into L-homocysteine and adenosine. This is Adenosylhomocysteinase from Bradyrhizobium elkanii.